The sequence spans 448 residues: Gamma conglutin 2 (448 aa).

The first 33 residues, 1–33 (MAKNMAQIFPFIAVFLSCSFIFVLSSSQNSQSL), serve as a signal peptide directing secretion. The region spanning 63-428 (HWANIHKRTP…DLERSRVEFN (366 aa)) is the Peptidase A1 domain. Disulfide bonds link Cys91–Cys181, Cys105–Cys118, Cys110–Cys136, Cys121–Cys131, and Cys349–Cys390. A glycan (N-linked (GlcNAc...) asparagine) is linked at Asn133.

This sequence belongs to the peptidase A1 family. In terms of assembly, two-subunit monomeric unit made of alpha and beta subunits coupled by disulfide bonds (at pH 4.5 and under non-reducing conditions). Can also form oligomers including dimer, tetramer and cyclic hexamer (trimer of dimers) (at pH &gt; 5.5). Component of globulins complexes which accumulate in seeds. Interacts with flavonoids (e.g. apigenin glucosides) present in globulins complexes. Glycosylated on alpha chain. In terms of tissue distribution, expressed in developing seeds and in the young roots and cotyledons of germinating seeds and young seedlings.

The protein resides in the secreted. It is found in the extracellular space. Sulfur-rich seed storage protein that remains undegraded at germination. The chain is Gamma conglutin 2 from Lupinus albus (White lupine).